The sequence spans 347 residues: Eukaryotic translation initiation factor 3 subunit I (347 aa).

WD repeat units follow at residues Gly8–Thr47, Gly50–Thr89, Thr91–Glu135, Glu151–Ser190, Leu193–Ser232, and Gly290–Lys329.

This sequence belongs to the eIF-3 subunit I family. Component of the eukaryotic translation initiation factor 3 (eIF-3) complex.

Its subcellular location is the cytoplasm. In terms of biological role, component of the eukaryotic translation initiation factor 3 (eIF-3) complex, which is involved in protein synthesis of a specialized repertoire of mRNAs and, together with other initiation factors, stimulates binding of mRNA and methionyl-tRNAi to the 40S ribosome. The eIF-3 complex specifically targets and initiates translation of a subset of mRNAs involved in cell proliferation. This chain is Eukaryotic translation initiation factor 3 subunit I, found in Vanderwaltozyma polyspora (strain ATCC 22028 / DSM 70294 / BCRC 21397 / CBS 2163 / NBRC 10782 / NRRL Y-8283 / UCD 57-17) (Kluyveromyces polysporus).